The sequence spans 142 residues: Large ribosomal subunit protein uL13 (142 aa).

Belongs to the universal ribosomal protein uL13 family. As to quaternary structure, part of the 50S ribosomal subunit.

In terms of biological role, this protein is one of the early assembly proteins of the 50S ribosomal subunit, although it is not seen to bind rRNA by itself. It is important during the early stages of 50S assembly. The sequence is that of Large ribosomal subunit protein uL13 from Pseudomonas aeruginosa (strain LESB58).